A 209-amino-acid polypeptide reads, in one-letter code: MSGKKRTASSSRWMQEHFDDHYVKLAQKRGLRSRAAFKIEEIQEKDKLIRPGMTVVDLGAAPGGWSQVAVKLAGDKGKVIACDILPMDPIVGVDFLQGDFREEKVLDALLTRVGDAKVDVVLSDMAPNMSGTGGVDQPRAMYLVELALDMCHQVLAPNGCFAVKVFQGEGFDEYMKAVKEAFKTVKTRKPDSSRPRSREVYLVATGYKL.

S-adenosyl-L-methionine is bound by residues Gly63, Trp65, Asp83, Asp99, and Asp124. Residue Lys164 is the Proton acceptor of the active site.

The protein belongs to the class I-like SAM-binding methyltransferase superfamily. RNA methyltransferase RlmE family.

The protein localises to the cytoplasm. It catalyses the reaction uridine(2552) in 23S rRNA + S-adenosyl-L-methionine = 2'-O-methyluridine(2552) in 23S rRNA + S-adenosyl-L-homocysteine + H(+). In terms of biological role, specifically methylates the uridine in position 2552 of 23S rRNA at the 2'-O position of the ribose in the fully assembled 50S ribosomal subunit. This chain is Ribosomal RNA large subunit methyltransferase E, found in Shewanella halifaxensis (strain HAW-EB4).